The sequence spans 513 residues: GMP synthase [glutamine-hydrolyzing] (513 aa).

The Glutamine amidotransferase type-1 domain maps to Thr-3–Asn-192. Cys-80 (nucleophile) is an active-site residue. Active-site residues include His-166 and Glu-168. One can recognise a GMPS ATP-PPase domain in the interval Trp-193–Arg-388. Ser-220–Ser-226 is an ATP binding site.

In terms of assembly, homodimer.

It carries out the reaction XMP + L-glutamine + ATP + H2O = GMP + L-glutamate + AMP + diphosphate + 2 H(+). The protein operates within purine metabolism; GMP biosynthesis; GMP from XMP (L-Gln route): step 1/1. Functionally, catalyzes the synthesis of GMP from XMP. The polypeptide is GMP synthase [glutamine-hydrolyzing] (Thermosipho melanesiensis (strain DSM 12029 / CIP 104789 / BI429)).